We begin with the raw amino-acid sequence, 955 residues long: 4-alpha-glucanotransferase DPE2 (955 aa).

Met1 carries the N-acetylmethionine modification. 2 CBM20 domains span residues 13 to 122 and 157 to 270; these read KSSK…LWQS and SDQD…PWRG. The disordered stretch occupies residues 925–955; that stretch reads SGRSVPANVSGEDINKSRGEVIANGSTKPNP.

Belongs to the disproportionating enzyme family.

It is found in the cytoplasm. The protein localises to the cytosol. It carries out the reaction Transfers a segment of a (1-&gt;4)-alpha-D-glucan to a new position in an acceptor, which may be glucose or a (1-&gt;4)-alpha-D-glucan.. Its activity is regulated as follows. Inactivated in response to cold stress. Cytosolic alpha-glucanotransferase essential for the cytosolic metabolism of maltose, an intermediate on the pathway by which starch is converted to sucrose in leaves at night. Metabolizes maltose exported from the chloroplast and is specific for beta-maltose. May play a role in freezing tolerance. Temperature drop induces inactivation of DPE2 that leads to rapid accumulation of maltose, a solute that protects cells from freezing damage. The polypeptide is 4-alpha-glucanotransferase DPE2 (DPE2) (Arabidopsis thaliana (Mouse-ear cress)).